The sequence spans 834 residues: Glycerol-3-phosphate acyltransferase (834 aa).

Positions 309 to 314 (CHRSHI) match the HXXXXD motif motif.

The protein belongs to the GPAT/DAPAT family.

The protein resides in the cell inner membrane. The catalysed reaction is sn-glycerol 3-phosphate + an acyl-CoA = a 1-acyl-sn-glycero-3-phosphate + CoA. It participates in phospholipid metabolism; CDP-diacylglycerol biosynthesis; CDP-diacylglycerol from sn-glycerol 3-phosphate: step 1/3. The protein is Glycerol-3-phosphate acyltransferase of Pseudomonas paraeruginosa (strain DSM 24068 / PA7) (Pseudomonas aeruginosa (strain PA7)).